The chain runs to 88 residues: Platelet factor 4 (88 aa).

Thr7 is a glycosylation site (O-linked (GalNAc...) threonine). Cystine bridges form between Cys25-Cys51 and Cys27-Cys67. Ser41 is modified (phosphoserine). A heparin-binding site is contributed by 76–82 (KKILKKL).

The protein belongs to the intercrine alpha (chemokine CxC) family. In terms of assembly, homotetramer. Interacts with TNFAIP6 (via Link domain). Interacts with CCR1. Interacts with CXCR3. Interacts with THBD; this interaction enhances generation of activated protein C. O-linked glycan consists of Gal-GalNAc disaccharide which is modified with sialic acid residues (microheterogeneity).

The protein localises to the secreted. Its function is as follows. Chemokine released during platelet aggregation that plays a role in different biological processes including hematopoiesis, cell proliferation, differentiation, and activation. Acts via different functional receptors including CCR1, CXCR3A or CXCR3B. Upon interaction with CXCR3A receptor, induces activated T-lymphocytes migration mediated via downstream Ras/extracellular signal-regulated kinase (ERK) signaling. Neutralizes the anticoagulant effect of heparin by binding more strongly to heparin than to the chondroitin-4-sulfate chains of the carrier molecule. Plays a role in the inhibition of hematopoiesis and in the maintenance of hematopoietic stem cell (HSC) quiescence. Chemotactic for neutrophils and monocytes via CCR1. Inhibits endothelial cell proliferation. In cooperation with toll-like receptor 8/TLR8, induces chromatin remodeling and activates inflammatory gene expression via the TBK1-IRF5 axis. In addition, induces myofibroblast differentiation and collagen synthesis in different precursor cells, including endothelial cells, by stimulating endothelial-to-mesenchymal transition. Interacts with thrombomodulin/THBD to enhance the activation of protein C and thus potentiates its anticoagulant activity. This chain is Platelet factor 4 (PF4), found in Bos taurus (Bovine).